We begin with the raw amino-acid sequence, 299 residues long: Peroxisomal biogenesis factor 19 (299 aa).

The disordered stretch occupies residues 1–63 (MAAAEEGCDA…SPGDTAKDAL (63 aa)). Residue Ala2 is modified to N-acetylalanine. The tract at residues 2-56 (AAAEEGCDAGVEADRELEELLESALDDFDKAKPSPAPPPTTSAPDASGPQKKSPG) is docking to the peroxisome membrane and binding to PEX3. A necessary for PEX19 function on peroxisome biogenesis region spans residues 2-91 (AAAEEGCDAG…QATAEFEKAM (90 aa)). Acidic residues predominate over residues 16–27 (RELEELLESALD). Phosphoserine occurs at positions 35, 54, and 66. The residue at position 236 (Thr236) is a Phosphothreonine. The residue at position 296 (Cys296) is a Cysteine methyl ester. Cys296 carries S-farnesyl cysteine lipidation. Positions 297–299 (LIM) are cleaved as a propeptide — removed in mature form.

It belongs to the peroxin-19 family. Interacts with a broad range of peroxisomal membrane proteins, including PEX3, PEX10, PEX11A, PEX11B, PEX12, PEX13, PEX14 and PEX16, PXMP2/PMP22, PXMP4/PMP24, SLC25A17/PMP34, ABCD1/ALDP, ABCD2/ALDRP, and ABCD3/PMP70. Also interacts with the tumor suppressor CDKN2A/p19ARF. Ubiquitous.

It localises to the cytoplasm. It is found in the peroxisome membrane. In terms of biological role, necessary for early peroxisomal biogenesis. Acts both as a cytosolic chaperone and as an import receptor for peroxisomal membrane proteins (PMPs). Binds and stabilizes newly synthesized PMPs in the cytoplasm by interacting with their hydrophobic membrane-spanning domains, and targets them to the peroxisome membrane by binding to the integral membrane protein PEX3. Excludes CDKN2A from the nucleus and prevents its interaction with MDM2, which results in active degradation of TP53. This is Peroxisomal biogenesis factor 19 (PEX19) from Cricetulus griseus (Chinese hamster).